Reading from the N-terminus, the 1303-residue chain is D-lysergyl-peptide-synthetase subunit 2 (1303 aa).

The adenylation (A) domain stretch occupies residues 256-653 (EWCRWTPSAV…CRKSTQVKLR (398 aa)). A Carrier domain is found at 793-869 (APSNDIEEAF…ELARHTKLVA (77 aa)). S830 is subject to O-(pantetheine 4'-phosphoryl)serine. Positions 905 to 1294 (EDVYPCTPLQ…HAAPRTLIGD (390 aa)) are condensation (C) domain.

The protein belongs to the NRP synthetase family.

It participates in alkaloid biosynthesis; ergot alkaloid biosynthesis. D-lysergyl-peptide-synthetase subunit 2; part of the gene cluster that mediates the biosynthesis of fungal ergot alkaloid. DmaW catalyzes the first step of ergot alkaloid biosynthesis by condensing dimethylallyl diphosphate (DMAP) and tryptophan to form 4-dimethylallyl-L-tryptophan. The second step is catalyzed by the methyltransferase easF that methylates 4-dimethylallyl-L-tryptophan in the presence of S-adenosyl-L-methionine, resulting in the formation of 4-dimethylallyl-L-abrine. The catalase easC and the FAD-dependent oxidoreductase easE then transform 4-dimethylallyl-L-abrine to chanoclavine-I which is further oxidized by easD in the presence of NAD(+), resulting in the formation of chanoclavine-I aldehyde. Agroclavine dehydrogenase easG then mediates the conversion of chanoclavine-I aldehyde to agroclavine via a non-enzymatic adduct reaction: the substrate is an iminium intermediate that is formed spontaneously from chanoclavine-I aldehyde in the presence of glutathione. The presence of easA is not required to complete this reaction. Further conversion of agroclavine to paspalic acid is a two-step process involving oxidation of agroclavine to elymoclavine and of elymoclavine to paspalic acid, the second step being performed by the elymoclavine oxidase cloA. Paspalic acid is then further converted to D-lysergic acid. Ergopeptines are assembled from D-lysergic acid and three different amino acids by the D-lysergyl-peptide-synthetases composed each of a monomudular and a trimodular nonribosomal peptide synthetase subunit. LpsB and lpsC encode the monomodular subunits responsible for D-lysergic acid activation and incorporation into the ergopeptine backbone. LpsA1 and A2 subunits encode the trimodular nonribosomal peptide synthetase assembling the tripeptide portion of ergopeptines. LpsA1 is responsible for formation of the major ergopeptine, ergotamine, and lpsA2 for alpha-ergocryptine, the minor ergopeptine of the total alkaloid mixture elaborated by C.purpurea. D-lysergyl-tripeptides are assembled by the nonribosomal peptide synthetases and released as N-(D-lysergyl-aminoacyl)-lactams. Cyclolization of the D-lysergyl-tripeptides is performed by the Fe(2+)/2-ketoglutarate-dependent dioxygenase easH which introduces a hydroxyl group into N-(D-lysergyl-aminoacyl)-lactam at alpha-C of the aminoacyl residue followed by spontaneous condensation with the terminal lactam carbonyl group. This is D-lysergyl-peptide-synthetase subunit 2 from Claviceps purpurea (strain 20.1) (Ergot fungus).